The chain runs to 248 residues: MANVSMRDMLEAGVHFGHQTRYWNPKMAPYIFGQRNKIHIINLEKTLPLYQEAMNYVGRLAAEGGKVLFVGTKRSARKAVREEASRCGMPYVDHRWLGGMLTNFRTVKGSIRRLKDLEAQAEDGTFDKLTKREALSLSREMEKLNRTLSGIKDMNGLPDAMFVIDVGFEHIAVQEARKLGIPVVAVVDTNNSPREVDYVIPGNDDAIRAIQLYLSGAADAVLEAKTATARPGGDDDFVEVDEATEQQG.

It belongs to the universal ribosomal protein uS2 family.

The chain is Small ribosomal subunit protein uS2 from Alkalilimnicola ehrlichii (strain ATCC BAA-1101 / DSM 17681 / MLHE-1).